Reading from the N-terminus, the 289-residue chain is Phospholipase A1 (289 aa).

Positions 1–20 are cleaved as a signal peptide; sequence MRTLQGWLLPVFMLPMAVYA. The Periplasmic portion of the chain corresponds to 21-52; that stretch reads QEATVKEVHDAPAVRGSIIANMLQEHDNPFTL. Residues 53-65 traverse the membrane as a beta stranded segment; that stretch reads YPYDTNYLIYTQT. Residues 66-84 lie on the Extracellular side of the membrane; it reads SDLNKEAIASYDWAENARK. A beta stranded transmembrane segment spans residues 85 to 99; sequence DEVKFQLSLAFPLWR. The Periplasmic segment spans residues 100–105; the sequence is GILGPN. Residues 106-118 form a beta stranded membrane-spanning segment; the sequence is SVLGASYTQKSWW. Topologically, residues 119–128 are extracellular; the sequence is QLSNSEESSP. Serine 126 lines the Ca(2+) pocket. Residues 129–148 form a beta stranded membrane-spanning segment; that stretch reads FRETNYEPQLFLGFATDYRF. The Periplasmic portion of the chain corresponds to 149 to 150; the sequence is AG. The chain crosses the membrane as a beta stranded span at residues 151–164; sequence WTLRDVEMGYNHDS. Histidine 162 acts as the Proton acceptor in catalysis. The active-site Nucleophile is the serine 164. Over 165–173 the chain is Extracellular; sequence NGRSDPTSR. Ca(2+) is bound by residues arginine 167 and serine 172. The beta stranded transmembrane segment at 174–186 threads the bilayer; that stretch reads SWNRLYTRLMAEN. The Periplasmic segment spans residues 187–188; the sequence is GN. Residues 189–198 traverse the membrane as a beta stranded segment; the sequence is WLVEVKPWYV. Residues 199–216 are Extracellular-facing; sequence VGNTDDNPDITKYMGYYQ. Aspartate 204 contributes to the Ca(2+) binding site. A beta stranded transmembrane segment spans residues 217 to 223; it reads LKIGYHL. Residues 224 to 225 are Periplasmic-facing; it reads GD. Residues 226-234 form a beta stranded membrane-spanning segment; it reads AVLSAKGQY. At 235 to 241 the chain is on the extracellular side; that stretch reads NWNTGYG. The beta stranded transmembrane segment at 242-250 threads the bilayer; the sequence is GAELGLSYP. Over 251-255 the chain is Periplasmic; sequence ITKHV. The beta stranded transmembrane segment at 256 to 265 threads the bilayer; the sequence is RLYTQVYSGY. Residues 266 to 274 are Extracellular-facing; sequence GESLIDYNF. A beta stranded transmembrane segment spans residues 275–286; it reads NQTRVGVGVMLN. Over 287–289 the chain is Periplasmic; it reads DLF.

This sequence belongs to the phospholipase A1 family. In terms of assembly, homodimer; dimerization is reversible, and the dimeric form is the active one. The cofactor is Ca(2+).

The protein resides in the cell outer membrane. It catalyses the reaction a 1,2-diacyl-sn-glycero-3-phosphocholine + H2O = a 2-acyl-sn-glycero-3-phosphocholine + a fatty acid + H(+). The enzyme catalyses a 1,2-diacyl-sn-glycero-3-phosphocholine + H2O = a 1-acyl-sn-glycero-3-phosphocholine + a fatty acid + H(+). Functionally, hydrolysis of phosphatidylcholine with phospholipase A2 (EC 3.1.1.4) and phospholipase A1 (EC 3.1.1.32) activities. The sequence is that of Phospholipase A1 (pldA) from Escherichia coli O157:H7.